Consider the following 38-residue polypeptide: Conotoxin r7a (38 aa).

Positions 1–5 (APAKR) are excised as a propeptide. 6'-bromotryptophan is present on W6. 4-carboxyglutamate is present on residues E10 and E11. Disulfide bonds link C12–C26, C19–C30, and C25–C35. Residue W15 is modified to 6'-bromotryptophan. 4-carboxyglutamate occurs at positions 20 and 31. 6'-bromotryptophan is present on W38.

It belongs to the conotoxin O2 superfamily. As to expression, expressed by the venom duct.

It localises to the secreted. Its function is as follows. Induces a sleep-like state in mice. This is Conotoxin r7a from Conus radiatus (Rayed cone).